A 397-amino-acid chain; its full sequence is Zinc finger transcription factor family protein 30 (397 aa).

Positions 1–40 (MKLEDDKIHSPTNTEEEGYGSDVEVENGTDISGSKGGSGV) are disordered. Over residues 14-27 (TEEEGYGSDVEVEN) the composition is skewed to acidic residues. 3 C2H2-type zinc fingers span residues 51-74 (FRCS…MQAH), 78-102 (YKCT…KQHH), and 107-125 (YMCR…LHIH).

It is found in the nucleus. In Caenorhabditis elegans, this protein is Zinc finger transcription factor family protein 30 (ztf-30).